A 92-amino-acid chain; its full sequence is Acylphosphatase (92 aa).

Cysteine 5 and cysteine 49 are oxidised to a cystine. The region spanning 5-92 is the Acylphosphatase-like domain; the sequence is CIIAWIYGRV…SGELTDFRIR (88 aa). Catalysis depends on residues arginine 20 and asparagine 38.

The protein belongs to the acylphosphatase family.

It catalyses the reaction an acyl phosphate + H2O = a carboxylate + phosphate + H(+). In Shigella boydii serotype 4 (strain Sb227), this protein is Acylphosphatase.